Consider the following 177-residue polypeptide: Ferritin heavy chain, oocyte isoform (177 aa).

Residues 7-156 enclose the Ferritin-like diiron domain; that stretch reads QNFHQECEAA…DHITNLRRMG (150 aa). Glu24, Glu59, His62, Glu104, and Gln138 together coordinate Fe cation.

This sequence belongs to the ferritin family. Oligomer of 24 subunits. There are two types of subunits: L (light) chain and H (heavy) chain. The functional molecule is roughly spherical and contains a central cavity into which the insoluble mineral iron core is deposited.

Its subcellular location is the cytoplasm. The enzyme catalyses 4 Fe(2+) + O2 + 4 H(+) = 4 Fe(3+) + 2 H2O. In terms of biological role, stores iron in a soluble, non-toxic, readily available form. Important for iron homeostasis. Has ferroxidase activity. Iron is taken up in the ferrous form and deposited as ferric hydroxides after oxidation. The sequence is that of Ferritin heavy chain, oocyte isoform from Xenopus laevis (African clawed frog).